The following is a 132-amino-acid chain: Small ribosomal subunit protein uS19 (132 aa).

It belongs to the universal ribosomal protein uS19 family.

Its function is as follows. Protein S19 forms a complex with S13 that binds strongly to the 16S ribosomal RNA. In Korarchaeum cryptofilum (strain OPF8), this protein is Small ribosomal subunit protein uS19.